The chain runs to 45 residues: FKBP-type peptidyl-prolyl cis-trans isomerase, chloroplastic (45 aa).

Belongs to the FKBP-type PPIase family. Expressed in leaves, but not in roots.

The protein resides in the plastid. It localises to the chloroplast thylakoid lumen. It catalyses the reaction [protein]-peptidylproline (omega=180) = [protein]-peptidylproline (omega=0). PPIases accelerate the folding of proteins. It catalyzes the cis-trans isomerization of proline imidic peptide bonds in oligopeptides. This chain is FKBP-type peptidyl-prolyl cis-trans isomerase, chloroplastic, found in Vicia faba (Broad bean).